A 105-amino-acid polypeptide reads, in one-letter code: Large ribosomal subunit protein uL24 (105 aa).

The protein belongs to the universal ribosomal protein uL24 family. In terms of assembly, part of the 50S ribosomal subunit.

Its function is as follows. One of two assembly initiator proteins, it binds directly to the 5'-end of the 23S rRNA, where it nucleates assembly of the 50S subunit. In terms of biological role, one of the proteins that surrounds the polypeptide exit tunnel on the outside of the subunit. In Thioalkalivibrio sulfidiphilus (strain HL-EbGR7), this protein is Large ribosomal subunit protein uL24.